The sequence spans 89 residues: LYR motif-containing protein 4 (89 aa).

The protein belongs to the complex I LYR family.

The protein localises to the mitochondrion. It is found in the nucleus. The protein operates within cofactor biosynthesis; iron-sulfur cluster biosynthesis. Required for nuclear and mitochondrial iron-sulfur protein biosynthesis. This is LYR motif-containing protein 4 (lyrm4) from Xenopus laevis (African clawed frog).